The primary structure comprises 483 residues: Altronate oxidoreductase (483 aa).

18–29 (IIQFGEGNFLRA) contributes to the NAD(+) binding site.

Belongs to the mannitol dehydrogenase family. UxaB subfamily.

It carries out the reaction D-altronate + NAD(+) = keto-D-tagaturonate + NADH + H(+). The protein operates within carbohydrate metabolism; pentose and glucuronate interconversion. This Escherichia coli O157:H7 protein is Altronate oxidoreductase (uxaB).